The sequence spans 202 residues: Holliday junction branch migration complex subunit RuvA (202 aa).

The segment at 1–64 (MIGRLRGTLA…EDAQLLYGFA (64 aa)) is domain I. Residues 65–143 (GKRERDFFRE…AWETSPAMFA (79 aa)) form a domain II region. The interval 144-154 (LVPNQPDGPAP) is flexible linker. Positions 154–202 (PVNTAENDAVSALISLGYKPQEASKAISAIKEKGLSSEDMIRRALKGMI) are domain III.

The protein belongs to the RuvA family. As to quaternary structure, homotetramer. Forms an RuvA(8)-RuvB(12)-Holliday junction (HJ) complex. HJ DNA is sandwiched between 2 RuvA tetramers; dsDNA enters through RuvA and exits via RuvB. An RuvB hexamer assembles on each DNA strand where it exits the tetramer. Each RuvB hexamer is contacted by two RuvA subunits (via domain III) on 2 adjacent RuvB subunits; this complex drives branch migration. In the full resolvosome a probable DNA-RuvA(4)-RuvB(12)-RuvC(2) complex forms which resolves the HJ.

The protein resides in the cytoplasm. In terms of biological role, the RuvA-RuvB-RuvC complex processes Holliday junction (HJ) DNA during genetic recombination and DNA repair, while the RuvA-RuvB complex plays an important role in the rescue of blocked DNA replication forks via replication fork reversal (RFR). RuvA specifically binds to HJ cruciform DNA, conferring on it an open structure. The RuvB hexamer acts as an ATP-dependent pump, pulling dsDNA into and through the RuvAB complex. HJ branch migration allows RuvC to scan DNA until it finds its consensus sequence, where it cleaves and resolves the cruciform DNA. This is Holliday junction branch migration complex subunit RuvA from Pseudomonas fluorescens (strain Pf0-1).